The following is a 393-amino-acid chain: Acetate kinase (393 aa).

Asn6 contacts Mg(2+). Lys13 lines the ATP pocket. Substrate is bound at residue Arg87. Residue Asp143 is the Proton donor/acceptor of the active site. ATP-binding positions include 203–207 (HLGNG), 278–280 (DMR), and 326–330 (GIGEN). Position 380 (Glu380) interacts with Mg(2+).

This sequence belongs to the acetokinase family. As to quaternary structure, homodimer. Requires Mg(2+) as cofactor. Mn(2+) serves as cofactor.

It localises to the cytoplasm. The enzyme catalyses acetate + ATP = acetyl phosphate + ADP. The protein operates within metabolic intermediate biosynthesis; acetyl-CoA biosynthesis; acetyl-CoA from acetate: step 1/2. Its function is as follows. Catalyzes the formation of acetyl phosphate from acetate and ATP. Can also catalyze the reverse reaction. This is Acetate kinase from Mycoplasma capricolum subsp. capricolum (strain California kid / ATCC 27343 / NCTC 10154).